A 520-amino-acid chain; its full sequence is GMP synthase [glutamine-hydrolyzing] (520 aa).

A Glutamine amidotransferase type-1 domain is found at 13–205 (KIIVLDYGSQ…ALNICKAKGD (193 aa)). Catalysis depends on Cys90, which acts as the Nucleophile. Residues His179 and Glu181 contribute to the active site. Residues 206 to 395 (WSMDNFIDMQ…LGMPDHIVWR (190 aa)) enclose the GMPS ATP-PPase domain. An ATP-binding site is contributed by 233 to 239 (SGGVDSS).

Homodimer.

The catalysed reaction is XMP + L-glutamine + ATP + H2O = GMP + L-glutamate + AMP + diphosphate + 2 H(+). It functions in the pathway purine metabolism; GMP biosynthesis; GMP from XMP (L-Gln route): step 1/1. Functionally, catalyzes the synthesis of GMP from XMP. The protein is GMP synthase [glutamine-hydrolyzing] of Streptococcus pneumoniae serotype 2 (strain D39 / NCTC 7466).